The sequence spans 612 residues: Alpha-glycerophosphate oxidase (612 aa).

An FAD-binding site is contributed by aspartate 21–glutamate 49. Residues glutamate 399–aspartate 408 are compositionally biased toward basic and acidic residues. The disordered stretch occupies residues glutamate 399–phenylalanine 418.

It belongs to the FAD-dependent glycerol-3-phosphate dehydrogenase family. Requires FAD as cofactor.

The protein localises to the cytoplasm. It catalyses the reaction sn-glycerol 3-phosphate + O2 = dihydroxyacetone phosphate + H2O2. This chain is Alpha-glycerophosphate oxidase (glpO), found in Streptococcus pyogenes serotype M1.